A 718-amino-acid chain; its full sequence is SANT and BTB domain regulator of class switch recombination (718 aa).

Positions 21–59 (DMILYPLIGIPQTINWETVARLVPGLTPKECVKRFDELK) constitute an SANT domain. In terms of domain architecture, BTB spans 147–255 (MVIHVCDEAK…QCIQYCHKNM (109 aa)). Positions 555 to 576 (SEEEEYTTGSEVTEDEVGDEEE) are enriched in acidic residues. 2 disordered regions span residues 555–622 (SEEE…SPFV) and 690–718 (RASV…GRPA). A compositionally biased stretch (basic residues) spans 580–595 (KQRKKEKPKKFTKPPK). Over residues 604 to 615 (QKKEKTLEKSTS) the composition is skewed to basic and acidic residues.

It belongs to the KIAA1841 family. As to quaternary structure, homodimer. Interacts (via the BTB domain) with HDAC1 and NCOR2.

In terms of biological role, negatively regulates class switch recombination or isotype switching in splenic B-cells. This chain is SANT and BTB domain regulator of class switch recombination, found in Mus musculus (Mouse).